The following is a 65-amino-acid chain: Beta-mammal toxin Tma1 (65 aa).

Residues 2–64 enclose the LCN-type CS-alpha/beta domain; sequence KEGYLVGNDG…TWNSAKNRCG (63 aa). 4 cysteine pairs are disulfide-bonded: Cys-12–Cys-63, Cys-16–Cys-38, Cys-24–Cys-44, and Cys-28–Cys-46.

The protein belongs to the long (4 C-C) scorpion toxin superfamily. Sodium channel inhibitor family. In terms of tissue distribution, expressed by the venom gland.

The protein localises to the secreted. In terms of biological role, beta toxins bind voltage-independently at site-4 of sodium channels (Nav) and shift the voltage of activation toward more negative potentials thereby affecting sodium channel activation and promoting spontaneous and repetitive firing. This toxin acts on human Nav1.4/SCN4A and Nav1.6/SCN8A voltage-gated sodium channels. The chain is Beta-mammal toxin Tma1 from Tityus macrochirus (Scorpion).